The sequence spans 1189 residues: MTPKKKIFQNFQANDNEILSPTKKGIKLNVSKLNILNFENTIITKEKTNYEYKASLNKEIDEVLNNNNIINTHNNKKNNLNLYDYNNIKNSTHEFYIDLNEQNKQTIKYNDNKFTPINKKEKYNLDETSSSSISSSLTNISSSLTNISSSLTNISSSLSNSLDEKKKKKKIKKNNSTIINILNNNNNNSNIHHNNKHNIYNKYNISKKPQNKEIHTLPSNHQIKKKSNNTYNTCQQKMKKNISKKNTHSIKNNQNDKNKEKNKEKDKNIKKDRDKDIQTKRTSHQSQDQNNHFERRILRSYTRNNDNVKNNLKNNINNNNTLKRSSQSVRIDSDLSSAHQNKRIKYDEKNIIHRNNNNNNNNNNKTTSNNHNKNNKINNNNPSENYKKQTDTKHTNNTQNNKYNKTKTTNTFKHPSKDHTDVNTKTFKSRYINTYTMEEVQKSIKSNTIKLVQENSCEYQDGIIYESIQINDEEYSIGEDVLIFYTPNNNTYNAKSDDKKNQNNNNIKENIYLLKKGKISSFYKSTNSKVIEVEICFYYDESDEQRIRELEKKQTSRRCKEDFNIYLDDDTKYYNLLGNIHFTILDANYIYKKIYVYNEIETFEEDTHARKGKNKFLCTHFIKDKEDRLCFIPNEDHWDNLVLGSSDLYYYFANEKKLNKNKSLKLIIEKLKINDKINDTQANQKKNNKKEYMNKAQTTTNVKANTHTKTLNDHNKSKTTKNKESSSTSFLQDVKKKSDPHNNDFQSSLKEDQENYYINLLKNIKDPTDKAIRMMQLDVVPKYLPCREKEIKEVHGFLESGIKQSGSNQILYISGMPGTGKTATVYSVIQLLQIKSRKKLLPSFNVFEINGMNVVHPNAAYQVFYKQLFNKKPPNALNSFKIIDRLFNKSQKDNRDVSILIIDEIDYLITKTQKVLFTLFDWPTKINSKLILIAISNTMDLPDRLIPRCRSRLAFGRLVFSPYKGDEIEKIIKERLENCKEIIDHTAIQLCARKVANVSGDIRKALQICRKAFENKRGHKIVPRDITEATNQLFDSPLTNAINYLPWAFKIFLTCLIIELRIINEFVIPYKKVVNRYKILIETSGKYIGMCSDNELFKIMLDKLVKMGILLIRPYIPLENISKNKSKEALLGFNESSKKGNNQKITRAQVSPDIDKESGDMGIELNVETQLIITALMKDPDCSKKLNFY.

The interval 1-53 (MTPKKKIFQNFQANDNEILSPTKKGIKLNVSKLNILNFENTIITKEKTNYEYK) is required for peripherial nuclear localization. T2 carries the phosphothreonine modification. Position 20 is a phosphoserine (S20). Leucine heptad repeat repeat units lie at residues 137 to 143 (LTNISSS), 144 to 150 (LTNISSS), 151 to 157 (LTNISSS), and 158 to 164 (LSNSLDE). Positions 239–248 (KKNISKKNTH) are enriched in basic residues. Disordered stretches follow at residues 239–421 (KKNI…DHTD) and 679–749 (DTQA…QSSL). Residues 254-279 (QNDKNKEKNKEKDKNIKKDRDKDIQT) show a composition bias toward basic and acidic residues. Positions 304 to 320 (NNDNVKNNLKNNINNNN) are enriched in low complexity. Positions 321-339 (TLKRSSQSVRIDSDLSSAH) are enriched in polar residues. Positions 353 to 381 (HRNNNNNNNNNNKTTSNNHNKNNKINNNN) are enriched in low complexity. The segment covering 385-394 (NYKKQTDTKH) has biased composition (basic and acidic residues). The segment covering 395-411 (TNNTQNNKYNKTKTTNT) has biased composition (low complexity). Over residues 695 to 709 (KAQTTTNVKANTHTK) the composition is skewed to polar residues. 2 stretches are compositionally biased toward basic and acidic residues: residues 710 to 724 (TLNDHNKSKTTKNKE) and 733 to 742 (DVKKKSDPHN). Residues V780 and 815 to 823 (GMPGTGKTA) each bind ATP. Mg(2+) is bound by residues D903 and E904. E904 is an ATP binding site. Residues 913 to 922 (QKVLFTLFDW) carry the PIP-box motif. ATP contacts are provided by N937 and R1003.

Belongs to the ORC1 family. In terms of assembly, component of the origin recognition complex (ORC). Interacts (via PIP-box) with PCNA1; the interaction occurs during DNA replication in trophozoites. In schizonts, may be phosphorylated by PK5; phosphorylation leads to ORC1 dissociation from the telomeres and var gene promoters, translocation to the cytoplasm, where it is degraded by the proteasome.

It localises to the nucleus. The protein localises to the chromosome. It is found in the telomere. The protein resides in the nucleolus. The catalysed reaction is ATP + H2O = ADP + phosphate + H(+). Functionally, component of the origin recognition complex (ORC) that binds origins of replication and thus may regulate the initiation of DNA replication. DNA-binding may not be ATP-dependent. In a SIR2A/Sir2-dependent manner, binds to and silences telomers and subtelomeric repeat regions (TAREs). In a SIR2A/Sir2-dependent manner, binds to promoters of var genes localized next to TAREs resulting in their silencing. The chain is Origin recognition complex subunit 1 from Plasmodium falciparum (isolate 3D7).